The primary structure comprises 433 residues: Legumain (433 aa).

An N-terminal signal peptide occupies residues 1 to 17 (MVWKVAVFLSVALGIGA). Residue N91 is glycosylated (N-linked (GlcNAc...) asparagine). Residue H148 is part of the active site. An N-linked (GlcNAc...) asparagine glycan is attached at N167. The Nucleophile role is filled by C189. 2 N-linked (GlcNAc...) asparagine glycosylation sites follow: N263 and N272. The propeptide occupies 324–433 (DLEESRQLTE…SMDHVCLGHY (110 aa)). Intrachain disulfides connect C378/C412 and C390/C429.

The protein belongs to the peptidase C13 family. Homodimer before autocatalytic removal of the propeptide. Monomer after autocatalytic processing. May interact with integrins. Post-translationally, activated by autocatalytic processing at pH 4. Ubiquitous. Particularly abundant in kidney, heart and placenta.

Its subcellular location is the lysosome. It carries out the reaction Hydrolysis of proteins and small molecule substrates at -Asn-|-Xaa- bonds.. Inhibited by CST6. Functionally, has a strict specificity for hydrolysis of asparaginyl bonds. Can also cleave aspartyl bonds slowly, especially under acidic conditions. Involved in the processing of proteins for MHC class II antigen presentation in the lysosomal/endosomal system. Also involved in MHC class I antigen presentation in cross-presenting dendritic cells by mediating cleavage and maturation of Perforin-2 (MPEG1), thereby promoting antigen translocation in the cytosol. Required for normal lysosomal protein degradation in renal proximal tubules. Required for normal degradation of internalized EGFR. Plays a role in the regulation of cell proliferation via its role in EGFR degradation. The sequence is that of Legumain from Homo sapiens (Human).